The following is a 901-amino-acid chain: Nuclear factor of activated T-cells, cytoplasmic 4 (901 aa).

Acidic residues predominate over residues 1–11 (MGAASCEDEEL). Disordered regions lie at residues 1–180 (MGAA…SSWS) and 203–361 (NEAA…TEDS). The span at 61–81 (IPRPPPPRPGMHSPPPRPAPS) shows a compositional bias: pro residues. The span at 96–109 (GGPGGTAGGTGGGR) shows a compositional bias: gly residues. The calcineurin-binding stretch occupies residues 114-119 (PSIRIT). Over residues 114–123 (PSIRITSISP) the composition is skewed to low complexity. The segment covering 151–165 (GFGGYREAGGQGGGA) has biased composition (gly residues). The segment covering 166-180 (FFSPSPGSSSLSSWS) has biased composition (low complexity). 4 positions are modified to phosphoserine: Ser-168, Ser-170, Ser-213, and Ser-217. The stretch at 213 to 229 (SPLPSPRASPRPWTPED) is one SP 1 repeat. The segment at 213 to 293 (SPLPSPRASP…LSRRGSLGEE (81 aa)) is 2 approximate SP repeats. Composition is skewed to pro residues over residues 215 to 227 (LPSP…PWTP) and 254 to 263 (GPIPASPRPA). Residues 268–270 (KRR) carry the Nuclear localization signal motif. Over residues 272–288 (SSSGTPSSASPALSRRG) the composition is skewed to low complexity. Residues 277-293 (PSSASPALSRRGSLGEE) form an SP 2; approximate repeat. Residues Ser-289, Ser-334, and Ser-344 each carry the phosphoserine modification. Residues 401-582 (SALPPLDWPL…VPIECSQRSA (182 aa)) form the RHD domain. A DNA-binding region spans residues 430–437 (RAHYETEG). Positions 586-683 (PQVEAYSPSA…KRSPTQSFKF (98 aa)) constitute an IPT/TIG domain. A Nuclear localization signal motif is present at residues 672–674 (RRK). Lys-689 is covalently cross-linked (Glycyl lysine isopeptide (Lys-Gly) (interchain with G-Cter in SUMO2)). 2 disordered regions span residues 697–721 (SLRG…PRPP) and 791–868 (QYGG…GFRD). Residues 805 to 822 (FSPPAPFRPPLPSSPPLE) are compositionally biased toward pro residues.

Member of the multicomponent NFATC transcription complex that consists of at least two components, a pre-existing cytoplasmic component NFATC2 and an inducible nuclear component NFATC1. Other NFAT proteins, such as NFATC4, NFATC3, or members of the activating protein-1 (AP-1) family and MAF can also bind the complex. NFAT proteins can bind DNA as monomers or dimers. Component of a promoter-binding complex composed of STAT3, NFATC3 and NFATC4; complex formation is enhanced by calcineurin. Interacts with CREBBP; this interaction potentiates transcription activation. Interacts with MAPK8/JNK1 and MAPK9/JNK2. Interacts with GATA4 (via the second Zn finger). Interacts (via N-terminus) with IRAK1 (via C-terminus). Interacts with RPS6KA3. Interacts with HOMER1, HOMER2 and HOMER3; this interaction competes with calcineurin/PPP3CA-binding and hence prevents NFATC4 dephosphorylation and activation. Interacts with ESR1 and ESR2; this interaction decreases NFATC4 transcriptional activity. Interacts with MTOR and MAPK7/ERK5. Interacts with TRIM17; this interaction prevents NFATC3 nuclear localization. Interacts with TCF25 (via C-terminus); the interaction leads to suppression of NFATC4 transcription factor activity and is reduced following stimulation with angiotensin-2. In terms of processing, phosphorylated by NFATC-kinases; dephosphorylated by calcineurin/PPP3CA. Phosphorylated on Ser-168 and Ser-170 by MTOR, IRAK1, MAPK7/ERK5 and MAPK14/p38, on Ser-213 and Ser-217 by MAPK8 and MAPK9, and on Ser-289 and Ser-344 by RPS6KA3. Phosphorylated by GSK3B; this phosphorylation markedly increases NFATC4 ubiquitination. Phosphorylation by MAPK8/JNK1, MAPK9/JNK2 and RPS6KA3 may stimulate NFATC4 transcriptional activity. Phosphorylation at Ser-168 and Ser-170 is stimulated by UV irradiation. Ubiquitinated, leading to degradation by the proteasome. Ubiquitination may be stimulated by GSK3B-dependent phosphorylation. Polyubiquitin linkage mainly occurs through 'Lys-48'. Expressed in heart (at protein level).

The protein localises to the cytoplasm. It localises to the nucleus. Ca(2+)-regulated transcription factor that is involved in several processes, including the development and function of the immune, cardiovascular, musculoskeletal, and nervous systems. Involved in T-cell activation, stimulating the transcription of cytokine genes, including that of IL2 and IL4. Along with NFATC3, involved in embryonic heart development. Following JAK/STAT signaling activation and as part of a complex with NFATC3 and STAT3, binds to the alpha-beta E4 promoter region of CRYAB and activates transcription in cardiomyocytes. Involved in mitochondrial energy metabolism required for cardiac morphogenesis and function. Transactivates many genes involved in heart physiology. Along with GATA4, binds to and activates NPPB/BNP promoter. Activates NPPA/ANP/ANF and MYH7/beta-MHC transcription. Binds to and transactivates AGTR2 gene promoter. Involved in the regulation of adult hippocampal neurogenesis. Involved in BDNF-driven pro-survival signaling in hippocampal adult-born neurons. Involved in the formation of long-term spatial memory and long-term potentiation. In cochlear nucleus neurons, may play a role in deafferentation-induced apoptosis during a developmental critical period when auditory neurons depend on afferent input for survival. Binds to and activates the BACE1/Beta-secretase 1 promoter, hence may regulate the proteolytic processing of the amyloid precursor protein (APP). Plays a role in adipocyte differentiation. May be involved in myoblast differentiation into myotubes. Binds the consensus DNA sequence 5'-GGAAAAT-3'. In the presence of CREBBP, activates TNF transcription. Binds to PPARG gene promoter and regulates its activity. Binds to PPARG and REG3G gene promoters. This is Nuclear factor of activated T-cells, cytoplasmic 4 (Nfatc4) from Rattus norvegicus (Rat).